A 446-amino-acid polypeptide reads, in one-letter code: Chromosomal replication initiator protein DnaA (446 aa).

Residues 1–92 (MENISDLWNS…SQAEEEIDLP (92 aa)) are domain I, interacts with DnaA modulators. The tract at residues 93 to 109 (PAKPNAAQDDSNHLPQS) is domain II. The tract at residues 110–326 (MLNPKYTFDT…GALIRVVAYS (217 aa)) is domain III, AAA+ region. The ATP site is built by G154, G156, K157, and T158. Residues 327–446 (SLINKDINAD…QVEEINDILK (120 aa)) form a domain IV, binds dsDNA region.

This sequence belongs to the DnaA family. In terms of assembly, oligomerizes as a right-handed, spiral filament on DNA at oriC.

It localises to the cytoplasm. Its function is as follows. Plays an essential role in the initiation and regulation of chromosomal replication. ATP-DnaA binds to the origin of replication (oriC) to initiate formation of the DNA replication initiation complex once per cell cycle. Binds the DnaA box (a 9 base pair repeat at the origin) and separates the double-stranded (ds)DNA. Forms a right-handed helical filament on oriC DNA; dsDNA binds to the exterior of the filament while single-stranded (ss)DNA is stabiized in the filament's interior. The ATP-DnaA-oriC complex binds and stabilizes one strand of the AT-rich DNA unwinding element (DUE), permitting loading of DNA polymerase. After initiation quickly degrades to an ADP-DnaA complex that is not apt for DNA replication. Binds acidic phospholipids. In Bacillus anthracis (strain A0248), this protein is Chromosomal replication initiator protein DnaA.